Reading from the N-terminus, the 183-residue chain is Large ribosomal subunit protein uL5 (183 aa).

It belongs to the universal ribosomal protein uL5 family. In terms of assembly, part of the 50S ribosomal subunit; part of the 5S rRNA/L5/L18/L25 subcomplex. Contacts the 5S rRNA and the P site tRNA. Forms a bridge to the 30S subunit in the 70S ribosome.

In terms of biological role, this is one of the proteins that bind and probably mediate the attachment of the 5S RNA into the large ribosomal subunit, where it forms part of the central protuberance. In the 70S ribosome it contacts protein S13 of the 30S subunit (bridge B1b), connecting the 2 subunits; this bridge is implicated in subunit movement. Contacts the P site tRNA; the 5S rRNA and some of its associated proteins might help stabilize positioning of ribosome-bound tRNAs. This chain is Large ribosomal subunit protein uL5, found in Chlorobaculum tepidum (strain ATCC 49652 / DSM 12025 / NBRC 103806 / TLS) (Chlorobium tepidum).